The sequence spans 413 residues: MGVIELCNTSSICIGRANPSCCSIERNQRRRIICMASSVPVQEESQQKQRVTGDAFIRPHLLKLSPYQPILPFEVLSTRLGRKPEDIVKLDANENPYGPPPEVIEALGAMKFPYIYPDPESRTLRAALAEDSGLESEYILAGCGADELIDLIMRCVLDPGDMIVDCPPTFTMYEFDAAVNGAHVIKVPRNPDFSLDVERIAEVVEHEKPKCIFLTSPNNPDGSIIDDETLLKILDLPILVILDEAYVEFSGMESKMKWVKKHENLIVLRTFSKRAGLAGLRVGYGAFPKSIIEFLWRAKQPYNVSVAAEVAACAALKNPAYLENVKVALVQERERLFNLLKEVPFLDPYPSYSNFILCKVTSGMDAKKLKEDLATMGVMIRHYNSKELKGYVRVSVGKPEHTEALMKCLKHFY.

Residues 1–35 constitute a chloroplast transit peptide; that stretch reads MGVIELCNTSSICIGRANPSCCSIERNQRRRIICM. Lysine 273 is modified (N6-(pyridoxal phosphate)lysine).

It belongs to the class-II pyridoxal-phosphate-dependent aminotransferase family. Histidinol-phosphate aminotransferase subfamily. As to quaternary structure, homodimer. Pyridoxal 5'-phosphate serves as cofactor. Expressed in flowers, leaves, stems and roots.

The protein resides in the plastid. It localises to the chloroplast. It carries out the reaction L-histidinol phosphate + 2-oxoglutarate = 3-(imidazol-4-yl)-2-oxopropyl phosphate + L-glutamate. It functions in the pathway amino-acid biosynthesis; L-histidine biosynthesis; L-histidine from 5-phospho-alpha-D-ribose 1-diphosphate: step 7/9. The polypeptide is Histidinol-phosphate aminotransferase, chloroplastic (HPA) (Nicotiana plumbaginifolia (Leadwort-leaved tobacco)).